Here is a 454-residue protein sequence, read N- to C-terminus: Bifunctional protein GlmU (454 aa).

The segment at 1 to 228 (MSPLHVVILA…PFEVQGVNNR (228 aa)) is pyrophosphorylase. Residues 9–12 (LAAG), lysine 23, glutamine 74, 79–80 (GT), 101–103 (YGD), glycine 138, glutamate 153, asparagine 168, and asparagine 226 contribute to the UDP-N-acetyl-alpha-D-glucosamine site. Aspartate 103 lines the Mg(2+) pocket. Asparagine 226 contributes to the Mg(2+) binding site. Positions 229–249 (LQLAELERWYQRQQAERLMTE) are linker. The tract at residues 250-454 (GASLADPARI…IAGWERPKKA (205 aa)) is N-acetyltransferase. Positions 332 and 350 each coordinate UDP-N-acetyl-alpha-D-glucosamine. Histidine 362 serves as the catalytic Proton acceptor. The UDP-N-acetyl-alpha-D-glucosamine site is built by tyrosine 365 and asparagine 376. Residues alanine 379, 385–386 (NY), serine 404, alanine 422, and arginine 439 each bind acetyl-CoA.

It in the N-terminal section; belongs to the N-acetylglucosamine-1-phosphate uridyltransferase family. In the C-terminal section; belongs to the transferase hexapeptide repeat family. As to quaternary structure, homotrimer. It depends on Mg(2+) as a cofactor.

It localises to the cytoplasm. The enzyme catalyses alpha-D-glucosamine 1-phosphate + acetyl-CoA = N-acetyl-alpha-D-glucosamine 1-phosphate + CoA + H(+). It carries out the reaction N-acetyl-alpha-D-glucosamine 1-phosphate + UTP + H(+) = UDP-N-acetyl-alpha-D-glucosamine + diphosphate. It functions in the pathway nucleotide-sugar biosynthesis; UDP-N-acetyl-alpha-D-glucosamine biosynthesis; N-acetyl-alpha-D-glucosamine 1-phosphate from alpha-D-glucosamine 6-phosphate (route II): step 2/2. Its pathway is nucleotide-sugar biosynthesis; UDP-N-acetyl-alpha-D-glucosamine biosynthesis; UDP-N-acetyl-alpha-D-glucosamine from N-acetyl-alpha-D-glucosamine 1-phosphate: step 1/1. The protein operates within bacterial outer membrane biogenesis; LPS lipid A biosynthesis. Its function is as follows. Catalyzes the last two sequential reactions in the de novo biosynthetic pathway for UDP-N-acetylglucosamine (UDP-GlcNAc). The C-terminal domain catalyzes the transfer of acetyl group from acetyl coenzyme A to glucosamine-1-phosphate (GlcN-1-P) to produce N-acetylglucosamine-1-phosphate (GlcNAc-1-P), which is converted into UDP-GlcNAc by the transfer of uridine 5-monophosphate (from uridine 5-triphosphate), a reaction catalyzed by the N-terminal domain. In Marinobacter nauticus (strain ATCC 700491 / DSM 11845 / VT8) (Marinobacter aquaeolei), this protein is Bifunctional protein GlmU.